The chain runs to 108 residues: UPF0102 protein Shewmr4_3685 (108 aa).

It belongs to the UPF0102 family.

The polypeptide is UPF0102 protein Shewmr4_3685 (Shewanella sp. (strain MR-4)).